A 475-amino-acid polypeptide reads, in one-letter code: Tubulin epsilon chain (475 aa).

148–154 (GGGTGSG) is a binding site for GTP.

The protein belongs to the tubulin family. In terms of assembly, found in a complex with TEDC1, TEDC2, TUBE1 and TUBD1.

It is found in the cytoplasm. The protein resides in the cytoskeleton. The protein localises to the microtubule organizing center. Its subcellular location is the centrosome. This Mus musculus (Mouse) protein is Tubulin epsilon chain (Tube1).